A 418-amino-acid chain; its full sequence is STE20-related kinase adapter protein beta (418 aa).

In terms of domain architecture, Protein kinase spans 58 to 369; sequence YELQVEIGRG…ASSLLSHVFF (312 aa). ATP contacts are provided by residues 64–72 and Lys89; that span reads IGRGFDNLT.

Belongs to the protein kinase superfamily. STE Ser/Thr protein kinase family. STE20 subfamily. In terms of assembly, component of a trimeric complex composed of STK11/LKB1, STRAD (STRADA or STRADB) and CAB39/MO25 (CAB39/MO25alpha or CAB39L/MO25beta): the complex tethers STK11/LKB1 in the cytoplasm and stimulates its catalytic activity. Interacts with BIRC4/XIAP. These two proteins are likely to coexist in a complex with TAK1, TRAF6, TAB1 and TAB2. In terms of tissue distribution, highly expressed in heart, skeletal muscle, testis, liver and colon.

It is found in the nucleus. The protein localises to the cytoplasm. Functionally, pseudokinase which, in complex with CAB39/MO25 (CAB39/MO25alpha or CAB39L/MO25beta), binds to and activates STK11/LKB1. Adopts a closed conformation typical of active protein kinases and binds STK11/LKB1 as a pseudosubstrate, promoting conformational change of STK11/LKB1 in an active conformation. This chain is STE20-related kinase adapter protein beta (STRADB), found in Homo sapiens (Human).